Here is a 292-residue protein sequence, read N- to C-terminus: Cyclin-dependent-like kinase 5 (292 aa).

Positions Tyr4–Phe286 constitute a Protein kinase domain. Residues Ile10 to Val18 and Lys33 contribute to the ATP site. Catalysis depends on Asp126, which acts as the Proton acceptor. 2 residues coordinate Mg(2+): Asn131 and Asp144.

It belongs to the protein kinase superfamily. CMGC Ser/Thr protein kinase family. CDC2/CDKX subfamily. As to quaternary structure, heterodimer composed of a catalytic subunit cdk-5 and a regulatory subunit cdka-1. Interaction with cdka-1 is required for cdk-5 activation. Requires Mg(2+) as cofactor.

Its subcellular location is the cytoplasm. It localises to the cell projection. The protein resides in the dendrite. The enzyme catalyses L-seryl-[protein] + ATP = O-phospho-L-seryl-[protein] + ADP + H(+). It carries out the reaction L-threonyl-[protein] + ATP = O-phospho-L-threonyl-[protein] + ADP + H(+). Functionally, proline-directed serine/threonine-protein kinase which, in several motor neurons, promotes the polarized trafficking of synaptic vesicles and dense-core vesicles (DCV). In the ventral nerve cord, phosphorylates lin-10 and thereby prevents lin-10-mediated anterograde trafficking of the glutamate receptor glr-1. Involved in the inhibition of glr-1 trafficking in hypoxic conditions. In DA motor neurons but not in DB motor neurons, regulates axonal transport of synaptic vesicle precursors by inhibiting dynein-mediated retrograde transport. Regulates the trafficking of dense-core vesicles in DA and DB motor neurons by promoting anterograde trafficking to the axon and preventing dynein-dependent trafficking to the dendrite. May regulate these processes in association with cdka-1/p35. Activity may be regulated by cyy-1. Involved in synapse formation during DD motor neuron remodeling by regulating transport of disassembled synaptic material to the new synaptic sites probably by activating the motor protein unc-104/kinesin-3. Regulates microtubule polarity in the dendrite of DB motor neurons. May also play a role in GABAergic synaptic vesicle localization in the ventral nerve cord. This chain is Cyclin-dependent-like kinase 5, found in Caenorhabditis elegans.